The chain runs to 304 residues: Probable cobalamin biosynthesis protein CobD (304 aa).

The next 5 helical transmembrane spans lie at 2-22 (IVVL…KEYI), 50-70 (ILFS…AVYL), 73-93 (FILV…FSIT), 147-167 (VDGY…GAFI), and 284-304 (AAYS…AVFL).

Belongs to the CobD/CbiB family.

The protein resides in the cell membrane. Its pathway is cofactor biosynthesis; adenosylcobalamin biosynthesis. Functionally, converts cobyric acid to cobinamide by the addition of aminopropanol on the F carboxylic group. The protein is Probable cobalamin biosynthesis protein CobD of Thermoplasma volcanium (strain ATCC 51530 / DSM 4299 / JCM 9571 / NBRC 15438 / GSS1).